Here is a 336-residue protein sequence, read N- to C-terminus: Ketoreductase adrE (336 aa).

Tyr171 lines the NADP(+) pocket.

This sequence belongs to the NAD(P)-dependent epimerase/dehydratase family. Dihydroflavonol-4-reductase subfamily.

The protein operates within secondary metabolite biosynthesis; terpenoid biosynthesis. Functionally, ketoreductase; part of the gene cluster that mediates the biosynthesis of andrastins, meroterpenoid compounds that exhibit inhibitory activity against ras farnesyltransferase, suggesting that they could be promising leads for antitumor agents. The first step of the pathway is the synthesis of 3,5-dimethylorsellinic acid (DMOA) by the polyketide synthase adrD via condensation of one acetyl-CoA starter unit with 3 malonyl-CoA units and 2 methylations. DMAO is then converted to farnesyl-DMAO by the prenyltransferase adrG. The methyltransferase adrK catalyzes the methylation of the carboxyl group of farnesyl-DMAO to farnesyl-DMAO methyl ester which is further converted to epoxyfarnesyl-DMAO methyl ester by the FAD-dependent monooxygenase adrH. The terpene cyclase adrI then catalyzes the carbon skeletal rearrangement to generate the andrastin E, the first compound in the pathway having the andrastin scaffold, with the tetracyclic ring system. The post-cyclization tailoring enzymes adrF, adrE, adrJ, and adrA, are involved in the conversion of andrastin E into andrastin A. The short chain dehydrogenase adrF is responsible for the oxidation of the C-3 a hydroxyl group of andrastin E to yield the corresponding ketone, andrastin D. The ketoreductase adrE stereoselectively reduces the carbonyl moiety to reverse the stereochemistry of the C-3 position to yield andrastin F. The acetyltransferase adrJ is the acetyltransferase that attaches the acetyl group to the C-3 hydroxyl group of andrastin F to yield andrastin C. Finally, the cytochrome P450 monooxygenase adrA catalyzes two sequential oxidation reactions of the C-23 methyl group, to generate the corresponding alcohol andrastin B, and aldehyde andrastin A. This Penicillium rubens (strain ATCC 28089 / DSM 1075 / NRRL 1951 / Wisconsin 54-1255) (Penicillium chrysogenum) protein is Ketoreductase adrE.